The primary structure comprises 458 residues: Fasciclin-like arabinogalactan protein 17 (458 aa).

Positions 1-30 (MDRRIYGGSAVIHLFLFFSVLIFSAASALS) are cleaved as a signal peptide. The FAS1 1 domain maps to 43-184 (NSNSVLVALL…GLIHGIERLL (142 aa)). An N-linked (GlcNAc...) asparagine glycan is attached at Asn80. The segment at 207–262 (PEGAPEVDPRTNRLKKPAAPVPAGSPPALPIQSAMAPGPSLAPAPAPGPGGKQHHF) is disordered. Residues 225–235 (APVPAGSPPAL) are compositionally biased toward pro residues. In terms of domain architecture, FAS1 2 spans 268-411 (VKDFIHTLLH…ISVQGIDGVL (144 aa)). An N-linked (GlcNAc...) asparagine glycan is attached at Asn290.

This sequence belongs to the fasciclin-like AGP family.

The protein resides in the secreted. Functionally, may be a cell surface adhesion protein. This Arabidopsis thaliana (Mouse-ear cress) protein is Fasciclin-like arabinogalactan protein 17 (FLA17).